The sequence spans 848 residues: Translation initiation factor IF-2 (848 aa).

The segment at 106–150 (TEQQTEAENSTNINLSEQTIKNNSHQSSSNTIETTQEKKQNDDLS) is disordered. Over residues 112–139 (AENSTNINLSEQTIKNNSHQSSSNTIET) the composition is skewed to polar residues. The region spanning 347–517 (PRAPIITVMG…LLLADMLELK (171 aa)) is the tr-type G domain. Residues 356 to 363 (GHVDHGKT) form a G1 region. A GTP-binding site is contributed by 356–363 (GHVDHGKT). A G2 region spans residues 381-385 (GITQH). Positions 403–406 (DTPG) are G3. GTP-binding positions include 403–407 (DTPGH) and 457–460 (NKID). The segment at 457–460 (NKID) is G4. The segment at 493 to 495 (SAL) is G5.

This sequence belongs to the TRAFAC class translation factor GTPase superfamily. Classic translation factor GTPase family. IF-2 subfamily.

The protein localises to the cytoplasm. Its function is as follows. One of the essential components for the initiation of protein synthesis. Protects formylmethionyl-tRNA from spontaneous hydrolysis and promotes its binding to the 30S ribosomal subunits. Also involved in the hydrolysis of GTP during the formation of the 70S ribosomal complex. This Orientia tsutsugamushi (strain Boryong) (Rickettsia tsutsugamushi) protein is Translation initiation factor IF-2.